Here is a 313-residue protein sequence, read N- to C-terminus: Beta-ketoacyl-[acyl-carrier-protein] synthase III (313 aa).

Residues Cys112 and His238 contribute to the active site. The segment at Gln239–Arg243 is ACP-binding. Residue Asn268 is part of the active site.

Belongs to the thiolase-like superfamily. FabH family. Homodimer.

It is found in the cytoplasm. The catalysed reaction is malonyl-[ACP] + acetyl-CoA + H(+) = 3-oxobutanoyl-[ACP] + CO2 + CoA. The protein operates within lipid metabolism; fatty acid biosynthesis. Catalyzes the condensation reaction of fatty acid synthesis by the addition to an acyl acceptor of two carbons from malonyl-ACP. Catalyzes the first condensation reaction which initiates fatty acid synthesis and may therefore play a role in governing the total rate of fatty acid production. Possesses both acetoacetyl-ACP synthase and acetyl transacylase activities. Its substrate specificity determines the biosynthesis of branched-chain and/or straight-chain of fatty acids. The sequence is that of Beta-ketoacyl-[acyl-carrier-protein] synthase III from Staphylococcus haemolyticus (strain JCSC1435).